We begin with the raw amino-acid sequence, 872 residues long: Translation initiation factor IF-2 (872 aa).

Basic and acidic residues predominate over residues 130-155; it reads AEEEAARAAEEEAARLAEEEAARRAA. A disordered region spans residues 130–282; the sequence is AEEEAARAAE…RERERLKHMQ (153 aa). Residues 156 to 181 are compositionally biased toward low complexity; the sequence is EPQSEPEAAAPAAEPVAPTAPVAAAP. The span at 182 to 194 shows a compositional bias: pro residues; sequence APAPATPVAPAQP. A compositionally biased stretch (low complexity) spans 195–211; that stretch reads KPVAAAAPAGDATAVPR. Over residues 271–282 the composition is skewed to basic and acidic residues; it reads RARERERLKHMQ. Positions 371 to 539 constitute a tr-type G domain; that stretch reads TRPPVVTVMG…AILLQAEILD (169 aa). The G1 stretch occupies residues 380-387; the sequence is GHVDHGKT. 380–387 is a GTP binding site; it reads GHVDHGKT. The tract at residues 405–409 is G2; the sequence is GITQH. The interval 427–430 is G3; sequence DTPG. GTP is bound by residues 427–431 and 481–484; these read DTPGH and NKID. The interval 481-484 is G4; that stretch reads NKID. The G5 stretch occupies residues 517 to 519; sequence SAK.

This sequence belongs to the TRAFAC class translation factor GTPase superfamily. Classic translation factor GTPase family. IF-2 subfamily.

The protein resides in the cytoplasm. One of the essential components for the initiation of protein synthesis. Protects formylmethionyl-tRNA from spontaneous hydrolysis and promotes its binding to the 30S ribosomal subunits. Also involved in the hydrolysis of GTP during the formation of the 70S ribosomal complex. The protein is Translation initiation factor IF-2 of Paramagnetospirillum magneticum (strain ATCC 700264 / AMB-1) (Magnetospirillum magneticum).